Reading from the N-terminus, the 359-residue chain is 4-galactosyl-N-acetylglucosaminide 3-alpha-L-fucosyltransferase 9 (359 aa).

Residues 1-11 (MTSTSKGILRP) lie on the Cytoplasmic side of the membrane. A helical; Signal-anchor for type II membrane protein membrane pass occupies residues 12 to 32 (FLIVCVILACFMACLLIYIKP). Residues 33–359 (TNSWVFSPME…VGNLEKWFWN (327 aa)) are Lumenal-facing. Asn-62 is a glycosylation site (N-linked (GlcNAc...) asparagine). The segment at 63–168 (ETTILVWVWP…RRDSDIQVPY (106 aa)) is acceptor-binding. Residue Gln-75 coordinates a beta-D-galactosyl-(1-&gt;4)-N-acetyl-beta-D-glucosaminyl derivative. Disulfide bonds link Cys-82–Cys-335, Cys-91–Cys-338, and Cys-190–Cys-238. Asn-101 is a glycosylation site (N-linked (GlcNAc...) asparagine). Glu-137 is an a beta-D-galactosyl-(1-&gt;4)-N-acetyl-beta-D-glucosaminyl derivative binding site. Glu-137 acts as the Nucleophile in catalysis. Glu-137 lines the GDP-beta-L-fucose pocket. Asn-153 is a glycosylation site (N-linked (GlcNAc...) asparagine). Positions 168, 192, 194, 195, 202, 226, 241, 246, 252, 255, and 256 each coordinate GDP-beta-L-fucose. The donor-binding stretch occupies residues 169–326 (GFLTVSTNPF…NWRKDFTVNL (158 aa)). The tract at residues 327–359 (PRFWESHACLACDHVKRHQEYKSVGNLEKWFWN) is acceptor-binding.

It belongs to the glycosyltransferase 10 family. In terms of assembly, homodimer. Post-translationally, N-glycosylated with complex-type N-glycans.

Its subcellular location is the golgi apparatus. It localises to the trans-Golgi network membrane. The protein localises to the golgi apparatus membrane. The catalysed reaction is a beta-D-galactosyl-(1-&gt;4)-N-acetyl-beta-D-glucosaminyl derivative + GDP-beta-L-fucose = a beta-D-galactosyl-(1-&gt;4)-[alpha-L-fucosyl-(1-&gt;3)]-N-acetyl-beta-D-glucosaminyl derivative + GDP + H(+). The enzyme catalyses an alpha-Neu5Ac-(2-&gt;3)-beta-D-Gal-(1-&gt;4)-beta-D-GlcNAc-(1-&gt;3)-beta-D-Gal-(1-&gt;4)-beta-D-GlcNAc derivative + GDP-beta-L-fucose = an alpha-Neu5Ac-(2-&gt;3)-beta-D-Gal-(1-&gt;4)-beta-D-GlcNAc-(1-&gt;3)-beta-D-Gal-(1-&gt;4)-[alpha-L-Fuc-(1-&gt;3)]-beta-D-GlcNAc derivative + GDP + H(+). It carries out the reaction alpha-N-glycoloylneuraminosyl-(2-&gt;3)-beta-D-galactosyl-(1-&gt;4)-N-acetyl-beta-D-glucosaminyl-(1-&gt;3)-beta-D-galactosyl-(1-&gt;4)-N-acetyl-beta-D-glucosaminyl-(1-&gt;3)-beta-D-galactosyl-(1-&gt;4)-beta-D-glucosyl-(1&lt;-&gt;1')-ceramide + GDP-beta-L-fucose = alpha-N-glycoloylneuraminosyl-(2-&gt;3)-beta-D-galactosyl-(1-&gt;4)-N-acetyl-beta-D-glucosaminyl-(1-&gt;3)-beta-D-galactosyl-(1-&gt;4)-[alpha-L-fucosyl-(1-&gt;3)]-N-acetyl-beta-D-glucosaminyl-(1-&gt;3)-beta-D-galactosyl-(1-&gt;4)-beta-D-glucosyl-(1&lt;-&gt;1')-ceramide + GDP + H(+). It catalyses the reaction alpha-D-galactosyl-(1-&gt;3)-beta-D-galactosyl-(1-&gt;4)-N-acetyl-beta-D-glucosaminyl-(1-&gt;3)-beta-D-galactosyl-(1-&gt;4)-beta-D-glucosyl-(1&lt;-&gt;1')-ceramide + GDP-beta-L-fucose = a neolactoside IV(3)-alpha-Gal,III(3)-alpha-Fuc-nLc4Cer + GDP + H(+). The catalysed reaction is a neolactoside nLc4Cer + GDP-beta-L-fucose = a neolactoside III(3)-alpha-Fuc-nLc4Cer + GDP + H(+). The enzyme catalyses an N-acetyl-alpha-neuraminyl-(2-&gt;3)-beta-D-galactosyl-(1-&gt;4)-N-acetyl-beta-D-glucosaminyl derivative + GDP-beta-L-fucose = an alpha-Neu5Ac-(2-&gt;3)-beta-D-Gal-(1-&gt;4)-[alpha-L-Fuc-(1-&gt;3)]-beta-D-GlcNAc derivative + GDP + H(+). It carries out the reaction beta-D-Gal-(1-&gt;4)-beta-D-GlcNAc-(1-&gt;3)-beta-D-Gal-(1-&gt;4)-D-Glc + GDP-beta-L-fucose = beta-D-Gal-(1-&gt;4)-[alpha-L-Fuc-(1-&gt;3)]-beta-D-GlcNAc-(1-&gt;3)-beta-D-Gal-(1-&gt;4)-D-Glc + GDP + H(+). It catalyses the reaction an alpha-L-Fuc-(1-&gt;2)-beta-D-Gal-(1-&gt;4)-beta-D-GlcNAc derivative + GDP-beta-L-fucose = an alpha-L-Fuc-(1-&gt;2)-beta-D-Gal-(1-&gt;4)-[alpha-L-Fuc-(1-&gt;3)]-beta-D-GlcNAc derivative + GDP + H(+). It participates in protein modification; protein glycosylation. The protein operates within glycolipid biosynthesis. Activated by Mn2+. Catalyzes alpha(1-&gt;3) linkage of fucosyl moiety transferred from GDP-beta-L-fucose to N-acetyl glucosamine (GlcNAc) within type 2 lactosamine (LacNAc, beta-D-Gal-(1-&gt;4)-beta-D-GlcNAc-) glycan attached to glycolipids and N- or O-linked glycoproteins. Fucosylates distal type 2 LacNAc and its fucosylated (H-type 2 LacNAc) and sialylated (sialyl-type 2 LacNAc) derivatives to form Lewis x (Lex) (CD15) and Lewis y (Ley) antigenic epitopes involved in cell adhesion and differentiation. Generates Lex epitopes in the brain, presumably playing a role in the maintenance of neuronal stemness and neurite outgrowth in progenitor neural cells. Fucosylates the internal type 2 LacNAc unit of the polylactosamine chain to form VIM-2 antigen that serves as recognition epitope for SELE. Can also modify milk oligosaccharides in particular type 2 tetrasaccharide LNnT. The chain is 4-galactosyl-N-acetylglucosaminide 3-alpha-L-fucosyltransferase 9 from Cricetulus griseus (Chinese hamster).